The primary structure comprises 589 residues: Formate--tetrahydrofolate ligase (589 aa).

74-81 provides a ligand contact to ATP; the sequence is TPFGEGKS.

The protein belongs to the formate--tetrahydrofolate ligase family.

It catalyses the reaction (6S)-5,6,7,8-tetrahydrofolate + formate + ATP = (6R)-10-formyltetrahydrofolate + ADP + phosphate. It participates in one-carbon metabolism; tetrahydrofolate interconversion. In Thermodesulfovibrio yellowstonii (strain ATCC 51303 / DSM 11347 / YP87), this protein is Formate--tetrahydrofolate ligase.